The following is an 890-amino-acid chain: DNA mismatch repair protein MutS (890 aa).

645–652 (GPNMAGKS) contacts ATP.

The protein belongs to the DNA mismatch repair MutS family.

This protein is involved in the repair of mismatches in DNA. It is possible that it carries out the mismatch recognition step. This protein has a weak ATPase activity. This is DNA mismatch repair protein MutS from Rickettsia conorii (strain ATCC VR-613 / Malish 7).